Consider the following 329-residue polypeptide: Peroxidase 51 (329 aa).

A signal peptide spans 1-25; it reads MVVMNKTNLLLLILSLFLAINLSSA. 4 disulfide bridges follow: Cys-36-Cys-119, Cys-69-Cys-74, Cys-125-Cys-325, and Cys-204-Cys-236. Catalysis depends on His-67, which acts as the Proton acceptor. Asp-68, Val-71, Gly-73, Asp-75, and Ser-77 together coordinate Ca(2+). Residue Pro-167 participates in substrate binding. Residue His-197 participates in heme b binding. Thr-198 serves as a coordination point for Ca(2+). A glycan (N-linked (GlcNAc...) asparagine) is linked at Asn-215. Residues Asp-249, Thr-252, and Asp-257 each contribute to the Ca(2+) site.

Belongs to the peroxidase family. Classical plant (class III) peroxidase subfamily. Requires heme b as cofactor. It depends on Ca(2+) as a cofactor.

The protein resides in the secreted. The catalysed reaction is 2 a phenolic donor + H2O2 = 2 a phenolic radical donor + 2 H2O. Removal of H(2)O(2), oxidation of toxic reductants, biosynthesis and degradation of lignin, suberization, auxin catabolism, response to environmental stresses such as wounding, pathogen attack and oxidative stress. These functions might be dependent on each isozyme/isoform in each plant tissue. The polypeptide is Peroxidase 51 (PER51) (Arabidopsis thaliana (Mouse-ear cress)).